The primary structure comprises 193 residues: Hydroxyacylglutathione hydrolase-like protein (193 aa).

The Zn(2+) site is built by H54, H56, D58, H59, and H110.

The protein belongs to the metallo-beta-lactamase superfamily. Glyoxalase II family. The cofactor is Zn(2+).

Hydrolase acting on ester bonds. This chain is Hydroxyacylglutathione hydrolase-like protein (HAGHL), found in Bos taurus (Bovine).